A 301-amino-acid chain; its full sequence is Protoheme IX farnesyltransferase (301 aa).

The next 9 membrane-spanning stretches (helical) occupy residues 9-29 (VLAY…VATI), 42-62 (IALI…ANSL), 89-109 (TSHA…WLWW), 113-133 (LLAG…YTMV), 142-162 (VVWG…AVTG), 168-188 (PIVL…ALAM), 211-231 (VTKQ…TLVP), 232-252 (AAGV…LLMA), and 280-300 (VVFV…GSLL).

Belongs to the UbiA prenyltransferase family. Protoheme IX farnesyltransferase subfamily.

It localises to the cell membrane. The enzyme catalyses heme b + (2E,6E)-farnesyl diphosphate + H2O = Fe(II)-heme o + diphosphate. The protein operates within porphyrin-containing compound metabolism; heme O biosynthesis; heme O from protoheme: step 1/1. Its function is as follows. Converts heme B (protoheme IX) to heme O by substitution of the vinyl group on carbon 2 of heme B porphyrin ring with a hydroxyethyl farnesyl side group. The chain is Protoheme IX farnesyltransferase from Rhodococcus jostii (strain RHA1).